We begin with the raw amino-acid sequence, 211 residues long: Interleukin-6 (211 aa).

A signal peptide spans M1–P29. C71 and C77 are oxidised to a cystine. S80 is modified (phosphoserine). A disulfide bond links C100 and C110.

This sequence belongs to the IL-6 superfamily. Component of a hexamer of two molecules each of IL6, IL6R and IL6ST; first binds to IL6R to associate with the signaling subunit IL6ST. Interacts with IL6R (via the N-terminal ectodomain); this interaction may be affected by IL6R-binding with SORL1, hence decreasing IL6 cis signaling. Interacts with SORL1 (via the N-terminal ectodomain); this interaction leads to IL6 internalization and lysosomal degradation. May form a trimeric complex with the soluble SORL1 ectodomain and soluble IL6R receptor; this interaction might stabilize circulating IL6, hence promoting IL6 trans signaling.

The protein resides in the secreted. Cytokine with a wide variety of biological functions in immunity, tissue regeneration, and metabolism. Binds to IL6R, then the complex associates to the signaling subunit IL6ST/gp130 to trigger the intracellular IL6-signaling pathway. The interaction with the membrane-bound IL6R and IL6ST stimulates 'classic signaling', whereas the binding of IL6 and soluble IL6R to IL6ST stimulates 'trans-signaling'. Alternatively, 'cluster signaling' occurs when membrane-bound IL6:IL6R complexes on transmitter cells activate IL6ST receptors on neighboring receiver cells. Functionally, IL6 is a potent inducer of the acute phase response. Rapid production of IL6 contributes to host defense during infection and tissue injury, but excessive IL6 synthesis is involved in disease pathology. In the innate immune response, is synthesized by myeloid cells, such as macrophages and dendritic cells, upon recognition of pathogens through toll-like receptors (TLRs) at the site of infection or tissue injury. In the adaptive immune response, is required for the differentiation of B cells into immunoglobulin-secreting cells. Plays a major role in the differentiation of CD4(+) T cell subsets. Essential factor for the development of T follicular helper (Tfh) cells that are required for the induction of germinal-center formation. Required to drive naive CD4(+) T cells to the Th17 lineage. Also required for proliferation of myeloma cells and the survival of plasmablast cells. Its function is as follows. Acts as an essential factor in bone homeostasis and on vessels directly or indirectly by induction of VEGF, resulting in increased angiogenesis activity and vascular permeability. Induces, through 'trans-signaling' and synergistically with IL1B and TNF, the production of VEGF. Involved in metabolic controls, is discharged into the bloodstream after muscle contraction increasing lipolysis and improving insulin resistance. 'Trans-signaling' in central nervous system also regulates energy and glucose homeostasis. Mediates, through GLP-1, crosstalk between insulin-sensitive tissues, intestinal L cells and pancreatic islets to adapt to changes in insulin demand. Also acts as a myokine. Plays a protective role during liver injury, being required for maintenance of tissue regeneration. Also has a pivotal role in iron metabolism by regulating HAMP/hepcidin expression upon inflammation or bacterial infection. Through activation of IL6ST-YAP-NOTCH pathway, induces inflammation-induced epithelial regeneration. In Camelus bactrianus (Bactrian camel), this protein is Interleukin-6 (IL6).